Here is a 606-residue protein sequence, read N- to C-terminus: Zinc finger protein 652 (606 aa).

S57 carries the post-translational modification Phosphoserine. A compositionally biased stretch (basic and acidic residues) spans 71 to 97 (HLHETEEQPYFRETRAVSDVHAVKEDR). Disordered regions lie at residues 71–113 (HLHE…VSYK) and 130–235 (VSKG…APVQ). The segment covering 98–109 (ENSDDTEEEEEE) has biased composition (acidic residues). At S100 the chain carries Phosphoserine. T103 is modified (phosphothreonine). Polar residues predominate over residues 137–149 (VSSQSKETPVLKT). A compositionally biased stretch (acidic residues) spans 152-170 (EEEEEESEEEATDDSNDYG). Positions 171-183 (ENEKQKKKEKIVE) are enriched in basic and acidic residues. A compositionally biased stretch (low complexity) spans 184-209 (KVSVTQRRTRRAASVAAATTSPTPRT). Phosphoserine occurs at positions 197 and 204. The segment at 245-268 (LTCEKCPRVFNTRWYLEKHMNVTH) adopts a C2H2-type 1 zinc-finger fold. A C2H2-type 2; degenerate zinc finger spans residues 272-294 (QICDKCGKKFVLESELSLHQQTD). C2H2-type zinc fingers lie at residues 299–322 (IQCV…KIVH), 329–351 (FSCE…MVAH), 357–379 (FTCE…SLQH), 385–407 (FRCE…MSIH), 413–435 (FMCQ…MKTH), and 441–463 (FICE…RRTH). Residues 469–492 (YPCDVCGQRFRFSNMLKAHKEKCF) form a C2H2-type 9; degenerate zinc finger. Residues 498–606 (VNVPPAVQIP…AEKNSSAQHH (109 aa)) form a mediates interaction with CBFA2T3 region.

It belongs to the krueppel C2H2-type zinc-finger protein family. Interacts with CBFA2T3. Widely expressed with higher expression in breast, prostate, vulva and pancreas.

It is found in the nucleus. Functionally, functions as a transcriptional repressor. This Homo sapiens (Human) protein is Zinc finger protein 652 (ZNF652).